The following is a 346-amino-acid chain: NADH-ubiquinone oxidoreductase chain 2 (346 aa).

11 helical membrane passes run 1–21, 25–45, 60–80, 95–115, 124–144, 149–169, 178–195, 200–219, 242–262, 274–294, and 326–346; these read MNPH…TITI, HWVL…PLIS, FLTQ…NAWA, CLLL…HFWF, LMTA…LLLM, LNPA…GWMG, ILAF…IILV, LALL…FMAL, ATLM…GFMP, EMTP…FFYL, and AILA…HAIV.

Belongs to the complex I subunit 2 family.

The protein localises to the mitochondrion inner membrane. The enzyme catalyses a ubiquinone + NADH + 5 H(+)(in) = a ubiquinol + NAD(+) + 4 H(+)(out). Its function is as follows. Core subunit of the mitochondrial membrane respiratory chain NADH dehydrogenase (Complex I) that is believed to belong to the minimal assembly required for catalysis. Complex I functions in the transfer of electrons from NADH to the respiratory chain. The immediate electron acceptor for the enzyme is believed to be ubiquinone. This is NADH-ubiquinone oxidoreductase chain 2 (MT-ND2) from Sibirionetta formosa (Baikal teal).